A 132-amino-acid polypeptide reads, in one-letter code: Holo-[acyl-carrier-protein] synthase (132 aa).

Mg(2+) is bound by residues aspartate 8 and glutamate 62.

Belongs to the P-Pant transferase superfamily. AcpS family. The cofactor is Mg(2+).

It is found in the cytoplasm. The catalysed reaction is apo-[ACP] + CoA = holo-[ACP] + adenosine 3',5'-bisphosphate + H(+). In terms of biological role, transfers the 4'-phosphopantetheine moiety from coenzyme A to a Ser of acyl-carrier-protein. The chain is Holo-[acyl-carrier-protein] synthase from Polaromonas sp. (strain JS666 / ATCC BAA-500).